Here is a 1221-residue protein sequence, read N- to C-terminus: Probable serine/threonine-protein kinase DDB_G0286465 (1221 aa).

Disordered stretches follow at residues 1 to 37, 104 to 133, and 173 to 263; these read MTLRLDTSLKRGASRNIPPIPTFSSVSNENLSSSPYT, FSPSTGRTKNNNNNNNNNINNNNYKKNDNQ, and ENNS…NNNE. Composition is skewed to low complexity over residues 24 to 37, 112 to 127, 173 to 192, and 204 to 263; these read SSVSNENLSSSPYT, KNNNNNNNNNINNNNY, ENNSQNNNNNKYQINNNMQK, and NNNN…NNNE. Positions 186-627 constitute a Protein kinase domain; it reads INNNMQKTGG…PYKLLDHPFF (442 aa). Position 192–200 (192–200) interacts with ATP; sequence KTGGRNGSV. An ATP-binding site is contributed by K271. A compositionally biased stretch (low complexity) spans 324–344; sequence NVNNNNSNNNNNNSNNNITNS. A disordered region spans residues 324 to 346; that stretch reads NVNNNNSNNNNNNSNNNITNSRY. D448 (proton acceptor) is an active-site residue. Composition is skewed to low complexity over residues 538 to 550 and 559 to 584; these read SPSSSSTTSTSTS and DSSSSASSSSSSSSSSSSSSSSSLPK. 5 disordered regions span residues 538-604, 712-782, 823-858, 959-1008, and 1105-1152; these read SPSS…PEKR, PNLS…KEKL, KFEKKQRQIQDSEKVNKNEEENQTKDDADNISPPLP, KENI…SYCN, and KKQE…QQEK. A compositionally biased stretch (basic and acidic residues) spans 591–604; that stretch reads RSKDNQSKLDPEKR. A compositionally biased stretch (low complexity) spans 725 to 738; that stretch reads KKQLQQYQQQQKQQ. The segment covering 746-756 has biased composition (acidic residues); the sequence is DDEEEKEEEEK. Basic and acidic residues-rich tracts occupy residues 757-769 and 823-850; these read EKEKEKEKEKEKE and KFEKKQRQIQDSEKVNKNEEENQTKDDA. Positions 959–993 are enriched in low complexity; the sequence is KENIINFHNNNNNNNNNNNNNNNNNNNNNNNNNNN.

Belongs to the protein kinase superfamily. Ser/Thr protein kinase family.

It carries out the reaction L-seryl-[protein] + ATP = O-phospho-L-seryl-[protein] + ADP + H(+). It catalyses the reaction L-threonyl-[protein] + ATP = O-phospho-L-threonyl-[protein] + ADP + H(+). This is Probable serine/threonine-protein kinase DDB_G0286465 from Dictyostelium discoideum (Social amoeba).